The primary structure comprises 330 residues: Probable deoxyhypusine synthase (330 aa).

The active-site Nucleophile is the K303.

This sequence belongs to the deoxyhypusine synthase family. It depends on NAD(+) as a cofactor.

It carries out the reaction [eIF5A protein]-L-lysine + spermidine = [eIF5A protein]-deoxyhypusine + propane-1,3-diamine. It participates in protein modification; eIF5A hypusination. Its function is as follows. Catalyzes the NAD-dependent oxidative cleavage of spermidine and the subsequent transfer of the butylamine moiety of spermidine to the epsilon-amino group of a specific lysine residue of the eIF-5A precursor protein to form the intermediate deoxyhypusine residue. This Methanocaldococcus jannaschii (strain ATCC 43067 / DSM 2661 / JAL-1 / JCM 10045 / NBRC 100440) (Methanococcus jannaschii) protein is Probable deoxyhypusine synthase (dys).